The sequence spans 308 residues: tRNA pseudouridine synthase B (308 aa).

The active-site Nucleophile is the aspartate 51.

Belongs to the pseudouridine synthase TruB family. Type 1 subfamily.

It catalyses the reaction uridine(55) in tRNA = pseudouridine(55) in tRNA. Functionally, responsible for synthesis of pseudouridine from uracil-55 in the psi GC loop of transfer RNAs. This Aromatoleum aromaticum (strain DSM 19018 / LMG 30748 / EbN1) (Azoarcus sp. (strain EbN1)) protein is tRNA pseudouridine synthase B.